The following is a 576-amino-acid chain: Septation ring formation regulator EzrA (576 aa).

Topologically, residues 1-7 (MSSTVII) are extracellular. Residues 8–26 (LIVVLLVILVAFYAFAILM) form a helical membrane-spanning segment. Over 27-576 (RKKTEDRILA…FKNKPTPDYL (550 aa)) the chain is Cytoplasmic. 2 coiled-coil regions span residues 105–134 (RARESVADSEAQIELMEGDVEGIRQGVAQL) and 277–301 (EQFELDRVEAELGLIQEKVEELYAI).

The protein belongs to the EzrA family.

It localises to the cell membrane. In terms of biological role, negative regulator of FtsZ ring formation; modulates the frequency and position of FtsZ ring formation. Inhibits FtsZ ring formation at polar sites. Interacts either with FtsZ or with one of its binding partners to promote depolymerization. This Lactococcus lactis subsp. lactis (strain IL1403) (Streptococcus lactis) protein is Septation ring formation regulator EzrA.